The chain runs to 243 residues: Triosephosphate isomerase (243 aa).

9–11 (NWK) provides a ligand contact to substrate. The active-site Electrophile is the His-96. Catalysis depends on Glu-165, which acts as the Proton acceptor. Residues Gly-171, Ser-204, and 225-226 (GG) contribute to the substrate site.

Belongs to the triosephosphate isomerase family. Homodimer.

The protein resides in the cytoplasm. It catalyses the reaction D-glyceraldehyde 3-phosphate = dihydroxyacetone phosphate. It participates in carbohydrate biosynthesis; gluconeogenesis. Its pathway is carbohydrate degradation; glycolysis; D-glyceraldehyde 3-phosphate from glycerone phosphate: step 1/1. Its function is as follows. Involved in the gluconeogenesis. Catalyzes stereospecifically the conversion of dihydroxyacetone phosphate (DHAP) to D-glyceraldehyde-3-phosphate (G3P). The sequence is that of Triosephosphate isomerase from Synechococcus sp. (strain CC9311).